Consider the following 412-residue polypeptide: Serine hydroxymethyltransferase (412 aa).

(6S)-5,6,7,8-tetrahydrofolate contacts are provided by residues Leu-117 and 121-123 (GHL). Lys-226 carries the post-translational modification N6-(pyridoxal phosphate)lysine. Residue 349 to 351 (SPF) coordinates (6S)-5,6,7,8-tetrahydrofolate.

The protein belongs to the SHMT family. In terms of assembly, homodimer. It depends on pyridoxal 5'-phosphate as a cofactor.

The protein resides in the cytoplasm. The enzyme catalyses (6R)-5,10-methylene-5,6,7,8-tetrahydrofolate + glycine + H2O = (6S)-5,6,7,8-tetrahydrofolate + L-serine. It participates in one-carbon metabolism; tetrahydrofolate interconversion. The protein operates within amino-acid biosynthesis; glycine biosynthesis; glycine from L-serine: step 1/1. Functionally, catalyzes the reversible interconversion of serine and glycine with tetrahydrofolate (THF) serving as the one-carbon carrier. This reaction serves as the major source of one-carbon groups required for the biosynthesis of purines, thymidylate, methionine, and other important biomolecules. Also exhibits THF-independent aldolase activity toward beta-hydroxyamino acids, producing glycine and aldehydes, via a retro-aldol mechanism. The protein is Serine hydroxymethyltransferase of Geobacillus thermodenitrificans (strain NG80-2).